The primary structure comprises 602 residues: MSTPLDHIRNFSIVAHIDHGKSTLADRLIQLTGGLDTREMKDQVLDSMDIERERGITIKAQTVRLSYKAKNGEDYVLNLIDTPGHVDFAYEVSRSLAACEGSLLVVDASQGVEAQTLANVYQAIDNNHEIVVVLNKIDLPAAEPERVKQQIEEVIGIDASDAVEISAKTGLGIEDVLEAIVNKLPAPKEGDRNAPLKAMLVDSWYDSYLGVIVLVRVIDGVLKKGQTIRMMGTGAKYPVERTGVFTPKMVQVDDLGPGELGFITASIKEVADTRVGDTITEDRRPTENMLSGFKPAQPVVFCGLFPVDAADFEDLRGAMGKLRLNDASFSFEMETSAALGFGFRCGFLGLLHLEIIQERLEREFNLDLITTAPSVVYRLNMTDGTHKELHNPADMPDVVKIASIEEPWIKATIMTPDDYLGAIMKLCQERRGIQIDLTYVGPRAMITYDLPLNEVVFDFYDRLKSISKGYASFDYNLSDYREGDLVKMSILVNEEPVDALSMLVHRSAAEKRGRALCEKLKELIPQHMFKIPIQAAIGGRIVARETISALRKDVTAKCYGGDVTRKRKLLEKQKEGKKRMRQFGKVEIPQEAFIQALKMGDD.

Positions 6–188 (DHIRNFSIVA…AIVNKLPAPK (183 aa)) constitute a tr-type G domain. GTP-binding positions include 18-23 (DHGKST) and 135-138 (NKID).

The protein belongs to the TRAFAC class translation factor GTPase superfamily. Classic translation factor GTPase family. LepA subfamily.

It is found in the cell inner membrane. The catalysed reaction is GTP + H2O = GDP + phosphate + H(+). Functionally, required for accurate and efficient protein synthesis under certain stress conditions. May act as a fidelity factor of the translation reaction, by catalyzing a one-codon backward translocation of tRNAs on improperly translocated ribosomes. Back-translocation proceeds from a post-translocation (POST) complex to a pre-translocation (PRE) complex, thus giving elongation factor G a second chance to translocate the tRNAs correctly. Binds to ribosomes in a GTP-dependent manner. The chain is Elongation factor 4 from Brucella suis (strain ATCC 23445 / NCTC 10510).